The chain runs to 253 residues: Uracil-DNA glycosylase (253 aa).

The active-site Proton acceptor is D79.

It belongs to the uracil-DNA glycosylase (UDG) superfamily. UNG family.

It is found in the cytoplasm. It catalyses the reaction Hydrolyzes single-stranded DNA or mismatched double-stranded DNA and polynucleotides, releasing free uracil.. Functionally, excises uracil residues from the DNA which can arise as a result of misincorporation of dUMP residues by DNA polymerase or due to deamination of cytosine. In Xylella fastidiosa (strain 9a5c), this protein is Uracil-DNA glycosylase.